The chain runs to 357 residues: UPF0283 membrane protein BSUIS_A1077 (357 aa).

The segment at 1–36 is disordered; that stretch reads MSDKTPRKPTAFRLEQPARVSAASEQEEPRHPRAVK. Over residues 27-36 the composition is skewed to basic and acidic residues; that stretch reads EEPRHPRAVK. 2 helical membrane passes run 78–98 and 109–129; these read ILFG…TEDL and LGWT…AIIL.

The protein belongs to the UPF0283 family.

It is found in the cell inner membrane. This is UPF0283 membrane protein BSUIS_A1077 from Brucella suis (strain ATCC 23445 / NCTC 10510).